A 331-amino-acid polypeptide reads, in one-letter code: 6-phosphogluconolactonase (331 aa).

The protein belongs to the cycloisomerase 2 family.

The enzyme catalyses 6-phospho-D-glucono-1,5-lactone + H2O = 6-phospho-D-gluconate + H(+). The protein operates within carbohydrate degradation; pentose phosphate pathway; D-ribulose 5-phosphate from D-glucose 6-phosphate (oxidative stage): step 2/3. Functionally, catalyzes the hydrolysis of 6-phosphogluconolactone to 6-phosphogluconate. In Salmonella paratyphi B (strain ATCC BAA-1250 / SPB7), this protein is 6-phosphogluconolactonase.